Reading from the N-terminus, the 210-residue chain is Signal peptidase complex catalytic subunit SEC11 (210 aa).

Over 1-21 (MLAGLSPHLSNLRRSLTQVLN) the chain is Cytoplasmic. A helical; Signal-anchor for type II membrane protein membrane pass occupies residues 22–38 (FALVLSTAFMMWKGLSI). Topologically, residues 39-210 (YTNSSSPIVV…MGAMVILQRE (172 aa)) are lumenal. The N-linked (GlcNAc...) asparagine glycan is linked to Asn41. Catalysis depends on charge relay system residues Ser53, His92, and Asp152. Residues 196–207 (VLLGIMGAMVIL) form a C-terminal short (CTS) helix region.

It belongs to the peptidase S26B family. In terms of assembly, component of the signal peptidase complex (SPC) composed of a catalytic subunit SEC11 and three accessory subunits SPC1, SPC2 and SPC3. The complex induces a local thinning of the ER membrane which is used to measure the length of the signal peptide (SP) h-region of protein substrates. This ensures the selectivity of the complex towards h-regions shorter than 18-20 amino acids. SPC associates with the translocon complex.

The protein localises to the endoplasmic reticulum membrane. It catalyses the reaction Cleavage of hydrophobic, N-terminal signal or leader sequences from secreted and periplasmic proteins.. Its function is as follows. Catalytic component of the signal peptidase complex (SPC) which catalyzes the cleavage of N-terminal signal sequences from nascent proteins as they are translocated into the lumen of the endoplasmic reticulum. Specifically cleaves N-terminal signal peptides that contain a hydrophobic alpha-helix (h-region) shorter than 18-20 amino acids. This chain is Signal peptidase complex catalytic subunit SEC11 (SEC11), found in Coccidioides posadasii (strain RMSCC 757 / Silveira) (Valley fever fungus).